The primary structure comprises 248 residues: Proteasome subunit alpha type-1 (248 aa).

The protein belongs to the peptidase T1A family. In terms of assembly, the 26S proteasome consists of a 20S proteasome core and two 19S regulatory subunits. The 20S proteasome core is composed of 28 subunits that are arranged in four stacked rings, resulting in a barrel-shaped structure. The two end rings are each formed by seven alpha subunits, and the two central rings are each formed by seven beta subunits. The catalytic chamber with the active sites is on the inside of the barrel.

The protein resides in the cytoplasm. It localises to the nucleus. Functionally, the proteasome is a multicatalytic proteinase complex which is characterized by its ability to cleave peptides with Arg, Phe, Tyr, Leu, and Glu adjacent to the leaving group at neutral or slightly basic pH. The proteasome has an ATP-dependent proteolytic activity. This chain is Proteasome subunit alpha type-1 (psmA1), found in Dictyostelium discoideum (Social amoeba).